The following is a 373-amino-acid chain: MAEAIGAVSLVGHRPSIVRITVKNELKTQKSQSIVRFPVKVDYSAKGVLSHLMTQSVKKNRMSVFPIRALAMELTKEKKKDDRLPKTWNYLDSGADDKPSLWPPENKADKPSLHNPLLRQERMGCGWLGAIFEWEGVLIEDNPDLDNQSWLTLAQEEGKSPPPAFMLRRVEGMKNEQAISEVLCWSRDPVQVRRMAKRKEEIFKALHGGVYRLRDGSQEFVNVLMNNKIPMALVSTRPRETLENAVGSIGIRKFFSVIVASEDVYRGKPDPEMFIYAAQLLDFIPERCIVFGNSNQTIEAAHDGRMKCVAVASKHPIYELGAAELVVRRLDELSIIDLKKLADTDLTEFEPELEMEKEDERELPSSAVAVDDF.

Belongs to the HAD-like hydrolase superfamily. DOG/GPP family. As to quaternary structure, homodimer. The cofactor is Mg(2+).

The protein resides in the plastid. It localises to the chloroplast. It catalyses the reaction 5-amino-6-(5-phospho-D-ribitylamino)uracil + H2O = 5-amino-6-(D-ribitylamino)uracil + phosphate. Catalyzes the dephosphorylation of 5-amino-6-(5-phospho-D-ribitylamino)uracil, also known as ARPP, but has no activity toward flavin mononucleotide (FMN). This is 5-amino-6-(5-phospho-D-ribitylamino)uracil phosphatase, chloroplastic from Arabidopsis thaliana (Mouse-ear cress).